A 235-amino-acid polypeptide reads, in one-letter code: MNHLPEHMENTLTGSQSSHASLRDIHSINPAQLMARIESYEGREKKGISDVRRTFCLFVTFDLLFVTLLWIIELNVNGGIENTLKKEVIHYDYYSSYFDIFLLAVFRFKVLILGYAVCRLRHWWAIALTTAVTSAFLLAKVILSKLFSQGAFGYVLPIISFILAWIETWFLDFKVLPQEAEEENRLLLVQDASERAALIPAGLSDGQFYSPPESEAGSEEEAEEKQESEKPLLEL.

N-acetylmethionine is present on M1. Positions 1–20 (MNHLPEHMENTLTGSQSSHA) are disordered. Over 1 to 53 (MNHLPEHMENTLTGSQSSHASLRDIHSINPAQLMARIESYEGREKKGISDVRR) the chain is Cytoplasmic. Polar residues predominate over residues 10–20 (NTLTGSQSSHA). 3 positions are modified to phosphoserine: S15, S21, and S27. Residues 48–218 (ISDVRRTFCL…YSPPESEAGS (171 aa)) enclose the MENTAL domain. A helical transmembrane segment spans residues 54-74 (TFCLFVTFDLLFVTLLWIIEL). Residues 75 to 97 (NVNGGIENTLKKEVIHYDYYSSY) are Extracellular-facing. The helical transmembrane segment at 98 to 118 (FDIFLLAVFRFKVLILGYAVC) threads the bilayer. Residues 119–122 (RLRH) lie on the Cytoplasmic side of the membrane. A helical transmembrane segment spans residues 123–143 (WWAIALTTAVTSAFLLAKVIL). The Extracellular segment spans residues 144–150 (SKLFSQG). Residues 151–171 (AFGYVLPIISFILAWIETWFL) traverse the membrane as a helical segment. The Cytoplasmic portion of the chain corresponds to 172 to 235 (DFKVLPQEAE…QESEKPLLEL (64 aa)). Phosphoserine is present on S193. A disordered region spans residues 202–235 (GLSDGQFYSPPESEAGSEEEAEEKQESEKPLLEL). The FFAT motif lies at 208-213 (FYSPPE). Residues 225–235 (KQESEKPLLEL) show a composition bias toward basic and acidic residues.

It belongs to the STARD3 family. As to quaternary structure, homodimer. Interacts (via the MENTAL domain) with STARD3NL. Interacts (via FFAT motif) with VAPA. Interacts (via FFAT motif) with VAPB. Interacts (via FFAT motif) with MOSPD2 (via MSP domain).

The protein resides in the late endosome membrane. In terms of biological role, tethering protein that creates contact site between the endoplasmic reticulum and late endosomes: localizes to late endosome membranes and contacts the endoplasmic reticulum via interaction with VAPA and VAPB. The protein is STARD3 N-terminal-like protein of Mus musculus (Mouse).